Reading from the N-terminus, the 140-residue chain is Anti-sigma F factor (140 aa).

It belongs to the anti-sigma-factor family.

The enzyme catalyses L-seryl-[protein] + ATP = O-phospho-L-seryl-[protein] + ADP + H(+). It carries out the reaction L-threonyl-[protein] + ATP = O-phospho-L-threonyl-[protein] + ADP + H(+). Functionally, binds to sigma F and blocks its ability to form an RNA polymerase holoenzyme (E-sigma F). Phosphorylates SpoIIAA on a serine residue. This phosphorylation may enable SpoIIAA to act as an anti-anti-sigma factor that counteracts SpoIIAB and thus releases sigma F from inhibition. This is Anti-sigma F factor from Clostridium perfringens (strain SM101 / Type A).